The primary structure comprises 405 residues: NADH-quinone oxidoreductase subunit D (405 aa).

Belongs to the complex I 49 kDa subunit family. In terms of assembly, NDH-1 is composed of 14 different subunits. Subunits NuoB, C, D, E, F, and G constitute the peripheral sector of the complex.

It localises to the cell inner membrane. The enzyme catalyses a quinone + NADH + 5 H(+)(in) = a quinol + NAD(+) + 4 H(+)(out). NDH-1 shuttles electrons from NADH, via FMN and iron-sulfur (Fe-S) centers, to quinones in the respiratory chain. The immediate electron acceptor for the enzyme in this species is believed to be ubiquinone. Couples the redox reaction to proton translocation (for every two electrons transferred, four hydrogen ions are translocated across the cytoplasmic membrane), and thus conserves the redox energy in a proton gradient. This is NADH-quinone oxidoreductase subunit D from Leptospira borgpetersenii serovar Hardjo-bovis (strain L550).